The sequence spans 97 residues: Acylphosphatase (97 aa).

The 95-residue stretch at 3 to 97 (KVKMIVSGRV…PDFTDFNIKY (95 aa)) folds into the Acylphosphatase-like domain. Active-site residues include Arg18 and Asn36.

Belongs to the acylphosphatase family.

The catalysed reaction is an acyl phosphate + H2O = a carboxylate + phosphate + H(+). This is Acylphosphatase (acyP) from Lactococcus lactis subsp. lactis (strain IL1403) (Streptococcus lactis).